Consider the following 432-residue polypeptide: Metacaspase-1 (432 aa).

Composition is skewed to low complexity over residues 1–14 (MYPG…NNAG) and 29–59 (QQYG…SQQY). Residues 1–70 (MYPGSGRYTY…PPPGPPPMAY (70 aa)) form a disordered region. The segment covering 60–70 (APPPGPPPMAY) has biased composition (pro residues). Residues H220 and C276 contribute to the active site.

Belongs to the peptidase C14B family.

The protein resides in the cytoplasm. The protein localises to the nucleus. Functionally, mediates cell death (apoptosis) triggered by oxygen stress, salt stress or chronological aging. Regulated cell death can prevent a release of toxic cellular components, thus avoiding necrotic collapse of the colony, and can also provide nutrients for healthy cells. Therefore, regulated cell death in yeast colonies can be as important for their development as are apoptosis and related processes that occur within metazoa. This chain is Metacaspase-1 (MCA1), found in Saccharomyces cerevisiae (strain YJM789) (Baker's yeast).